We begin with the raw amino-acid sequence, 399 residues long: Na(+)/H(+) antiporter NhaA (399 aa).

The next 11 helical transmembrane spans lie at 12 to 32 (LDIA…IAAN), 60 to 80 (LLLW…GLEI), 94 to 114 (LAAL…LIYA), 126 to 146 (GWAI…TLLG), 155 to 175 (IFLT…IAFF), 178 to 198 (ASLS…LIGL), 206 to 226 (LWPY…SGVH), 263 to 283 (PWVT…VSLA), 284 to 304 (GLPP…GLFL), 336 to 356 (GVAL…TLAF), and 372 to 392 (LGVL…LRLS).

Belongs to the NhaA Na(+)/H(+) (TC 2.A.33) antiporter family.

The protein resides in the cell inner membrane. It carries out the reaction Na(+)(in) + 2 H(+)(out) = Na(+)(out) + 2 H(+)(in). Its function is as follows. Na(+)/H(+) antiporter that extrudes sodium in exchange for external protons. This chain is Na(+)/H(+) antiporter NhaA, found in Rhodospirillum rubrum (strain ATCC 11170 / ATH 1.1.1 / DSM 467 / LMG 4362 / NCIMB 8255 / S1).